The primary structure comprises 95 residues: Aspartyl/glutamyl-tRNA(Asn/Gln) amidotransferase subunit C (95 aa).

It belongs to the GatC family. As to quaternary structure, heterotrimer of A, B and C subunits.

The enzyme catalyses L-glutamyl-tRNA(Gln) + L-glutamine + ATP + H2O = L-glutaminyl-tRNA(Gln) + L-glutamate + ADP + phosphate + H(+). The catalysed reaction is L-aspartyl-tRNA(Asn) + L-glutamine + ATP + H2O = L-asparaginyl-tRNA(Asn) + L-glutamate + ADP + phosphate + 2 H(+). Allows the formation of correctly charged Asn-tRNA(Asn) or Gln-tRNA(Gln) through the transamidation of misacylated Asp-tRNA(Asn) or Glu-tRNA(Gln) in organisms which lack either or both of asparaginyl-tRNA or glutaminyl-tRNA synthetases. The reaction takes place in the presence of glutamine and ATP through an activated phospho-Asp-tRNA(Asn) or phospho-Glu-tRNA(Gln). The polypeptide is Aspartyl/glutamyl-tRNA(Asn/Gln) amidotransferase subunit C (Chromobacterium violaceum (strain ATCC 12472 / DSM 30191 / JCM 1249 / CCUG 213 / NBRC 12614 / NCIMB 9131 / NCTC 9757 / MK)).